The following is a 147-amino-acid chain: Endoribonuclease YbeY (147 aa).

Residues H109, H113, and H119 each contribute to the Zn(2+) site.

It belongs to the endoribonuclease YbeY family. The cofactor is Zn(2+).

The protein localises to the cytoplasm. Its function is as follows. Single strand-specific metallo-endoribonuclease involved in late-stage 70S ribosome quality control and in maturation of the 3' terminus of the 16S rRNA. The protein is Endoribonuclease YbeY of Magnetococcus marinus (strain ATCC BAA-1437 / JCM 17883 / MC-1).